Reading from the N-terminus, the 345-residue chain is NADPH dehydrogenase (345 aa).

Position 23 to 26 (23 to 26) interacts with FMN; sequence SPMC. Y28 contacts substrate. Residues A60 and Q102 each coordinate FMN. 164 to 167 serves as a coordination point for substrate; it reads HGAH. FMN contacts are provided by residues R215 and 307–308; that span reads GR.

The protein belongs to the NADH:flavin oxidoreductase/NADH oxidase family. NamA subfamily. As to quaternary structure, homotetramer. It depends on FMN as a cofactor.

The catalysed reaction is A + NADPH + H(+) = AH2 + NADP(+). In terms of biological role, catalyzes the reduction of the double bond of an array of alpha,beta-unsaturated aldehydes and ketones. It also reduces the nitro group of nitroester and nitroaromatic compounds. It could have a role in detoxification processes. This chain is NADPH dehydrogenase, found in Bacillus cereus (strain ATCC 14579 / DSM 31 / CCUG 7414 / JCM 2152 / NBRC 15305 / NCIMB 9373 / NCTC 2599 / NRRL B-3711).